A 149-amino-acid chain; its full sequence is Large ribosomal subunit protein uL15 (149 aa).

2 stretches are compositionally biased toward basic residues: residues 1-14 (MPTR…HRGH) and 21-30 (RVGKHRKHPG). Residues 1 to 43 (MPTRFSKTRKHRGHVSAGKGRVGKHRKHPGGRGMAGGQHHHRT) form a disordered region.

The protein belongs to the universal ribosomal protein uL15 family. In terms of assembly, component of the large ribosomal subunit (LSU). Mature N.crassa ribosomes consist of a small (40S) and a large (60S) subunit. The 40S small subunit contains 1 molecule of ribosomal RNA (18S rRNA) and at least 32 different proteins. The large 60S subunit contains 3 rRNA molecules (26S, 5.8S and 5S rRNA) and at least 42 different proteins.

Its subcellular location is the cytoplasm. Component of the ribosome, a large ribonucleoprotein complex responsible for the synthesis of proteins in the cell. The small ribosomal subunit (SSU) binds messenger RNAs (mRNAs) and translates the encoded message by selecting cognate aminoacyl-transfer RNA (tRNA) molecules. The large subunit (LSU) contains the ribosomal catalytic site termed the peptidyl transferase center (PTC), which catalyzes the formation of peptide bonds, thereby polymerizing the amino acids delivered by tRNAs into a polypeptide chain. The nascent polypeptides leave the ribosome through a tunnel in the LSU and interact with protein factors that function in enzymatic processing, targeting, and the membrane insertion of nascent chains at the exit of the ribosomal tunnel. This is Large ribosomal subunit protein uL15 (rpl-28) from Neurospora crassa (strain ATCC 24698 / 74-OR23-1A / CBS 708.71 / DSM 1257 / FGSC 987).